The primary structure comprises 65 residues: Photosystem II reaction center protein J (65 aa).

Residues 1 to 17 (MSTKLKGPDGRIPDRLP) show a composition bias toward basic and acidic residues. A disordered region spans residues 1–20 (MSTKLKGPDGRIPDRLPDGT). A helical transmembrane segment spans residues 36–56 (LWLVATVGGMAVLSVLGLFFF).

This sequence belongs to the PsbJ family. In terms of assembly, PSII is composed of 1 copy each of membrane proteins PsbA, PsbB, PsbC, PsbD, PsbE, PsbF, PsbH, PsbI, PsbJ, PsbK, PsbL, PsbM, PsbT, PsbX, PsbY, Psb30/Ycf12, peripheral proteins PsbO, CyanoQ (PsbQ), PsbU, PsbV and a large number of cofactors. It forms dimeric complexes.

Its subcellular location is the cellular thylakoid membrane. One of the components of the core complex of photosystem II (PSII). PSII is a light-driven water:plastoquinone oxidoreductase that uses light energy to abstract electrons from H(2)O, generating O(2) and a proton gradient subsequently used for ATP formation. It consists of a core antenna complex that captures photons, and an electron transfer chain that converts photonic excitation into a charge separation. The sequence is that of Photosystem II reaction center protein J from Prochlorococcus marinus (strain MIT 9303).